A 336-amino-acid chain; its full sequence is Holliday junction branch migration complex subunit RuvB (336 aa).

The interval 1 to 185 (MSIIVERLLS…FGVLSRVEYY (185 aa)) is large ATPase domain (RuvB-L). Residues Leu24, Arg25, Gly66, Lys69, Thr70, Thr71, 132–134 (EDF), Arg175, Tyr185, and Arg222 each bind ATP. Thr70 contacts Mg(2+). Residues 186–256 (TVDQLSAIVE…ITQMALELLQ (71 aa)) are small ATPAse domain (RuvB-S). A head domain (RuvB-H) region spans residues 259–336 (KLGLDHIDHK…EHFGMEIPKV (78 aa)). DNA contacts are provided by Arg314 and Arg319.

This sequence belongs to the RuvB family. In terms of assembly, homohexamer. Forms an RuvA(8)-RuvB(12)-Holliday junction (HJ) complex. HJ DNA is sandwiched between 2 RuvA tetramers; dsDNA enters through RuvA and exits via RuvB. An RuvB hexamer assembles on each DNA strand where it exits the tetramer. Each RuvB hexamer is contacted by two RuvA subunits (via domain III) on 2 adjacent RuvB subunits; this complex drives branch migration. In the full resolvosome a probable DNA-RuvA(4)-RuvB(12)-RuvC(2) complex forms which resolves the HJ.

The protein localises to the cytoplasm. It catalyses the reaction ATP + H2O = ADP + phosphate + H(+). Functionally, the RuvA-RuvB-RuvC complex processes Holliday junction (HJ) DNA during genetic recombination and DNA repair, while the RuvA-RuvB complex plays an important role in the rescue of blocked DNA replication forks via replication fork reversal (RFR). RuvA specifically binds to HJ cruciform DNA, conferring on it an open structure. The RuvB hexamer acts as an ATP-dependent pump, pulling dsDNA into and through the RuvAB complex. RuvB forms 2 homohexamers on either side of HJ DNA bound by 1 or 2 RuvA tetramers; 4 subunits per hexamer contact DNA at a time. Coordinated motions by a converter formed by DNA-disengaged RuvB subunits stimulates ATP hydrolysis and nucleotide exchange. Immobilization of the converter enables RuvB to convert the ATP-contained energy into a lever motion, pulling 2 nucleotides of DNA out of the RuvA tetramer per ATP hydrolyzed, thus driving DNA branch migration. The RuvB motors rotate together with the DNA substrate, which together with the progressing nucleotide cycle form the mechanistic basis for DNA recombination by continuous HJ branch migration. Branch migration allows RuvC to scan DNA until it finds its consensus sequence, where it cleaves and resolves cruciform DNA. The polypeptide is Holliday junction branch migration complex subunit RuvB (Bacillus cereus (strain ATCC 14579 / DSM 31 / CCUG 7414 / JCM 2152 / NBRC 15305 / NCIMB 9373 / NCTC 2599 / NRRL B-3711)).